Reading from the N-terminus, the 228-residue chain is Ribose-5-phosphate isomerase A (228 aa).

Substrate is bound by residues 32-35 (TGST), 85-88 (DGAD), and 98-101 (KGGG). The Proton acceptor role is filled by Glu107. Position 125 (Lys125) interacts with substrate.

This sequence belongs to the ribose 5-phosphate isomerase family. In terms of assembly, homodimer.

It catalyses the reaction aldehydo-D-ribose 5-phosphate = D-ribulose 5-phosphate. Its pathway is carbohydrate degradation; pentose phosphate pathway; D-ribose 5-phosphate from D-ribulose 5-phosphate (non-oxidative stage): step 1/1. Catalyzes the reversible conversion of ribose-5-phosphate to ribulose 5-phosphate. The chain is Ribose-5-phosphate isomerase A from Cupriavidus necator (strain ATCC 17699 / DSM 428 / KCTC 22496 / NCIMB 10442 / H16 / Stanier 337) (Ralstonia eutropha).